A 169-amino-acid polypeptide reads, in one-letter code: Interleukin-2 (169 aa).

A signal peptide spans 1–20 (MYSMQLASCVTLTLVLLVNS). O-linked (GalNAc...) threonine glycosylation is present at Thr23. A disulfide bond links Cys92 and Cys140.

This sequence belongs to the IL-2 family. In terms of tissue distribution, produced by immune cells including dendritic cells. In contrast, macrophages do not produce IL2 upon bacterial stimulation.

The protein resides in the secreted. Functionally, cytokine produced by activated CD4-positive helper T-cells and to a lesser extend activated CD8-positive T-cells and natural killer (NK) cells that plays pivotal roles in the immune response and tolerance. Binds to a receptor complex composed of either the high-affinity trimeric IL-2R (IL2RA/CD25, IL2RB/CD122 and IL2RG/CD132) or the low-affinity dimeric IL-2R (IL2RB and IL2RG). Interaction with the receptor leads to oligomerization and conformation changes in the IL-2R subunits resulting in downstream signaling starting with phosphorylation of JAK1 and JAK3. In turn, JAK1 and JAK3 phosphorylate the receptor to form a docking site leading to the phosphorylation of several substrates including STAT5. This process leads to activation of several pathways including STAT, phosphoinositide-3-kinase/PI3K and mitogen-activated protein kinase/MAPK pathways. Functions as a T-cell growth factor and can increase NK-cell cytolytic activity as well. Promotes strong proliferation of activated B-cells and subsequently immunoglobulin production. Plays a pivotal role in regulating the adaptive immune system by controlling the survival and proliferation of regulatory T-cells, which are required for the maintenance of immune tolerance. Moreover, participates in the differentiation and homeostasis of effector T-cell subsets, including Th1, Th2, Th17 as well as memory CD8-positive T-cells. The sequence is that of Interleukin-2 (Il2) from Mus musculus (Mouse).